The following is a 307-amino-acid chain: Probable aspartoacylase (307 aa).

Zn(2+) is bound by residues histidine 13 and glutamate 16. Substrate contacts are provided by residues arginine 55 and 62–63 (NR). Histidine 105 contacts Zn(2+). The substrate site is built by glutamate 163 and tyrosine 276.

This sequence belongs to the AspA/AstE family. Aspartoacylase subfamily. Zn(2+) serves as cofactor.

It carries out the reaction an N-acyl-L-aspartate + H2O = a carboxylate + L-aspartate. The chain is Probable aspartoacylase from Prochlorococcus marinus (strain SARG / CCMP1375 / SS120).